We begin with the raw amino-acid sequence, 7839 residues long: Nonribosomal peptide synthetase GRA1 (7839 aa).

Over residues 1 to 23 (MALLNGKSTLPNGHNSSIESPNG) the composition is skewed to polar residues. The tract at residues 1–26 (MALLNGKSTLPNGHNSSIESPNGYTE) is disordered. Positions 264-650 (LASPNSCAVH…LGRIDDQVKI (387 aa)) are adenylation 1. The region spanning 793–866 (SAEALVLRQL…LQAEMSEKKK (74 aa)) is the Carrier 1 domain. Position 827 is an O-(pantetheine 4'-phosphoryl)serine (Ser827). Residues 916–1332 (DIYPASPLQE…ILSPSDVAQI (417 aa)) form a condensation 1 region. Residues 1351-1742 (FFTQVKRSPD…QRKDAQLKIR (392 aa)) are adenylation 2. The Carrier 2 domain maps to 1880-1957 (ELETEAERTM…AMSRQATVSD (78 aa)). An O-(pantetheine 4'-phosphoryl)serine modification is found at Ser1918. The interval 1997 to 2413 (DLYPCTPFQE…LISPSDMETI (417 aa)) is condensation 2. Residues 2432 to 2828 (FDRRLSQKHS…GRRDTQLKIR (397 aa)) are adenylation 3. A Carrier 3 domain is found at 2963–3040 (IPTTQMEWNL…DLAQAIVLDT (78 aa)). Residue Ser3001 is modified to O-(pantetheine 4'-phosphoryl)serine. The condensation 3 stretch occupies residues 3084–3496 (DIYPCTPLQD…QVDLISDSDH (413 aa)). Residues 3520 to 3923 (RLAVSNPDAE…GRRDSQVKLR (404 aa)) are adenylation 4. Residues 4057–4134 (RPLTEREKDL…DMAAMTTSLS (78 aa)) form the Carrier 4 domain. Residue Ser4095 is modified to O-(pantetheine 4'-phosphoryl)serine. Positions 4234–4569 (NLEEFVGRQS…MMNPDDAEEI (336 aa)) are condensation 4. The tract at residues 4591-4982 (HSKGCPDRIA…VSRKDTQVKF (392 aa)) is adenylation 5. Residues 5113–5189 (ALSSDEESQL…DMALCMTSAQ (77 aa)) enclose the Carrier 5 domain. Position 5150 is an O-(pantetheine 4'-phosphoryl)serine (Ser5150). Residues 5224–5653 (EDIYPCSALQ…VSPSDQAEIL (430 aa)) form a condensation 5 region. The interval 5671–6069 (FESRARLQPS…GRRDTQVKLR (399 aa)) is adenylation 6. The Carrier 6 domain occupies 6207 to 6282 (FPSSLAEQQM…HMAAIATTFT (76 aa)). Ser6243 carries the O-(pantetheine 4'-phosphoryl)serine modification. The segment at 6321–6730 (QDIYPCSALQ…RLADMDLTGP (410 aa)) is condensation 6. The interval 6756–7147 (EQRVKSQPDS…LGRKDSQIKL (392 aa)) is adenylation 7. The Carrier 7 domain occupies 7290–7366 (KAATPNEKTL…DLARVSRQSI (77 aa)). Ser7327 carries the O-(pantetheine 4'-phosphoryl)serine modification. A condensation7 region spans residues 7404-7704 (HDIYPCTQVQ…LDYAKKRASS (301 aa)).

This sequence belongs to the NRP synthetase family.

Its pathway is mycotoxin biosynthesis. Its function is as follows. Nonribosomal peptide synthetase; part of the gene cluster that mediates the biosynthesis of gramillins A and B, bicyclic lipopeptides that induce cell death in maize leaves but not in wheat leaves. The nonribosomal peptide synthetase GRA1 incorporates respectively a glutamic adic (Glu), a leucine (Leu), a serine (Ser), a hydroxyglutamine (HOGln), a 2-amino decanoic acid, and 2 cysteins (CysB and CysA). The biosynthesis of 2-amino decanoic acid incorporated in gramillins could be initiated by a fatty acid synthase composed of the alpha and beta subunits FGSG_00036 and FGSG_11656. The cytochrome P450 monooxygenase FGSG_15680 could hydroxylate the fatty acid chain. Subsequent oxidation to the ketone by the oxidoreductase FGSG_00048 and transamination by aminotransferase FGSG_00049 could form 2-amino-decanoic acid. On the other hand, FGSG_15680 could also be responsible for the HO-modified glutamine at the gamma-position. Whether hydroxylation occurs on the fully assembled product or on the Gln residue prior to assembly into the gramillins requires further proof. The thioredoxin FGSG_00043 could also be required for the disulfide-bond formation between CysA and CysB. The specific involvement of the remaining proteins from the cluster is more difficult to discern, but could have broader regulatory (FGSG_00040 and FGSG_11657) or enzymatic functions (FGSG_00044 and FGSG_00045). The final C-domain of GRA1 does not possess the expected sequence of a termination CT domain, often implicated in macrocyclization and release of a cyclopeptidein fungal NRPs; and the thioesterase FGSG_00047 may act in concert with the terminal C-domain of GRA1 to catalyze the formation of the macrocyclic anhydride and release of the products. The chain is Nonribosomal peptide synthetase GRA1 from Gibberella zeae (strain ATCC MYA-4620 / CBS 123657 / FGSC 9075 / NRRL 31084 / PH-1) (Wheat head blight fungus).